The primary structure comprises 381 residues: cAMP-dependent protein kinase type I-beta regulatory subunit (381 aa).

Positions 1 to 136 (MASPSCFHSE…ALAKAISKNV (136 aa)) are dimerization and phosphorylation. Serine 3 is modified (phosphoserine). Tyrosine 21 is modified (3'-nitrotyrosine). The disordered stretch occupies residues 66–88 (LARQKSNSQCDSHDEEISPTPPN). Phosphoserine is present on residues serine 77 and serine 83. The residue at position 85 (threonine 85) is a Phosphothreonine. The Pseudophosphorylation motif motif lies at 96–100 (RRGGV). Omega-N-methylarginine is present on arginine 97. Residues 137–254 (LFSH…SKVS), glutamate 202, arginine 211, 255–381 (ILES…SLTV), glutamate 326, and arginine 335 contribute to the 3',5'-cyclic AMP site.

This sequence belongs to the cAMP-dependent kinase regulatory chain family. As to quaternary structure, the inactive holoenzyme is composed of two regulatory chains and two catalytic chains. Activation by cAMP releases the two active catalytic monomers and the regulatory dimer. Interacts with PRKX; regulates this cAMP-dependent protein kinase. Interacts with smAKAP; this interaction may target PRKAR1B to the plasma membrane. Post-translationally, the pseudophosphorylation site binds to the substrate-binding region of the catalytic chain, resulting in the inhibition of its activity. In terms of tissue distribution, abundant in brain and testis. No expression in lung, heart, liver, spleen, kidney and skeletal muscle.

The protein localises to the cell membrane. In terms of biological role, regulatory subunit of the cAMP-dependent protein kinases involved in cAMP signaling in cells. The polypeptide is cAMP-dependent protein kinase type I-beta regulatory subunit (Prkar1b) (Rattus norvegicus (Rat)).